A 196-amino-acid chain; its full sequence is Zinc metalloproteinase-disintegrin-like bothrojarin-3 (196 aa).

One can recognise a Disintegrin domain in the interval 2 to 88; sequence PPVCGTELLE…DCPTDDIQRN (87 aa). Residues V4, L9, E11, E14, and D17 each contribute to the Ca(2+) site. 13 disulfides stabilise this stretch: C5–C34, C16–C29, C18–C24, C28–C51, C42–C48, C47–C73, C60–C80, C67–C99, C92–C104, C111–C161, C126–C168, C139–C149, and C156–C193. The D/ECD-tripeptide signature appears at 66–68; that stretch reads ECD.

It belongs to the venom metalloproteinase (M12B) family. P-III subfamily. P-IIIa sub-subfamily. In terms of assembly, monomer. Zn(2+) serves as cofactor. Post-translationally, glycosylated. Expressed by the venom gland.

The protein resides in the secreted. Functionally, the hemorrhagic metalloproteinase-disintegrin-like bothrojarin-1 is a potent inhibitor of collagen-induced platelet aggregation by blockage of alpha-2/beta-1 (ITGA2/ITGB1) integrin. It does not present any fibrinogen-clotting activity. In Bothrops jararaca (Jararaca), this protein is Zinc metalloproteinase-disintegrin-like bothrojarin-3.